Here is a 325-residue protein sequence, read N- to C-terminus: RNA ligase 1 (325 aa).

The cofactor is Mg(2+). Mn(2+) is required as a cofactor. AMPylates itself (auto-AMPylation).

The enzyme catalyses ATP + (ribonucleotide)n-3'-hydroxyl + 5'-phospho-(ribonucleotide)m = (ribonucleotide)n+m + AMP + diphosphate.. Functions as an RNA ligase, in vitro. The ligation reaction entails three nucleotidyl transfer steps. In the first step, the RNA ligase reacts with ATP in the absence of nucleic acid to form a covalent ligase-AMP intermediate and release pyrophosphate. In step 2, the ligase-AMP binds to the nucleic acid and transfers the adenylate to the 5'-PO4 terminus to form an adenylylated intermediate. In step 3, the RNA ligase directs the attack of the 3'-OH on the 5'-phosphoanhydride linkage, resulting in a repaired 3'-5' phosphodiester and release of AMP. Exhibits selectivity for single-stranded RNA substrates and may not have nick-sealing activity on double-stranded DNA-RNA hybrids. May play a role in maintaining RNA integrity under stress conditions, for example in response to reactive oxygen species (ROS). In Rattus norvegicus (Rat), this protein is RNA ligase 1.